Reading from the N-terminus, the 300-residue chain is Tegument protein VP22 (300 aa).

Residues 1–148 (MTSRRSVKSC…PARGRRPAQA (148 aa)) are disordered. Composition is skewed to basic and acidic residues over residues 10-22 (CPRE…HEEL) and 50-61 (PRGEVRFLHYDE). The Nuclear localization signal motif lies at 163-166 (GRTK). The interval 174-267 (KKLHFSTAPP…LVNPDAAQDV (94 aa)) is interaction with gE. The Nuclear export signal signature appears at 232–244 (LNELLDLTTIRVT). The segment covering 269-292 (ATAAARGRPAGRAAATARAPARSA) has biased composition (low complexity). Positions 269-300 (ATAAARGRPAGRAAATARAPARSASRPRRPLE) are disordered.

This sequence belongs to the alphaherpesvirinae VP22 tegument protein family. Interacts with gE (via C-terminus); this interaction is necessary for the recruitment of VP22 to the Golgi and its packaging into virions. Interacts with gM (via C-terminus). Interacts with VP16; this interaction allows the formation of a tripartite complex composed of VP16, VP22 and UL41/VHS. Interacts with the capsid-binding protein UL16. Interacts with host CGAS. Post-translationally, highly phosphorylated in the host cell. Packaging is selective for underphosphorylated forms.

It localises to the virion tegument. The protein localises to the host cytoplasm. Its subcellular location is the host nucleus. It is found in the host Golgi apparatus. In terms of biological role, tegument protein that plays different roles during the time course of infection. Participates in both the accumulation of viral mRNAs and viral protein translation at late time of infection. Modulates the RNase activity of the virion host shutoff protein UL41 probably to ensure necessary levels of key cellular mRNAs and proteins. Plays a role in microtubule reorganization that occurs after viral infection by stabilizing microtubule network. Plays a role in the inhibition of host innate immune system by targeting the CGAS enzymatic activity which is the principal cytosolic DNA sensor that detects invading viral DNA. Acts by mediating disruption of liquid-like droplets in which CGAS is activated, thereby preventing CGAS activity. The protein is Tegument protein VP22 of Homo sapiens (Human).